We begin with the raw amino-acid sequence, 590 residues long: Aspartate--tRNA(Asp/Asn) ligase (590 aa).

Glu176 is a binding site for L-aspartate. An aspartate region spans residues 200–203 (QLFK). L-aspartate contacts are provided by Arg222 and His451. Residue 222–224 (RDE) coordinates ATP. Glu485 provides a ligand contact to ATP. Arg492 provides a ligand contact to L-aspartate. ATP is bound at residue 537 to 540 (GIDR).

It belongs to the class-II aminoacyl-tRNA synthetase family. Type 1 subfamily. As to quaternary structure, homodimer.

It localises to the cytoplasm. It catalyses the reaction tRNA(Asx) + L-aspartate + ATP = L-aspartyl-tRNA(Asx) + AMP + diphosphate. Its function is as follows. Aspartyl-tRNA synthetase with relaxed tRNA specificity since it is able to aspartylate not only its cognate tRNA(Asp) but also tRNA(Asn). Reaction proceeds in two steps: L-aspartate is first activated by ATP to form Asp-AMP and then transferred to the acceptor end of tRNA(Asp/Asn). This is Aspartate--tRNA(Asp/Asn) ligase from Ehrlichia ruminantium (strain Gardel).